Consider the following 263-residue polypeptide: Hydroxyethylthiazole kinase (263 aa).

Met-39 provides a ligand contact to substrate. ATP-binding residues include Lys-115 and Thr-160. Position 187 (Gly-187) interacts with substrate.

It belongs to the Thz kinase family. It depends on Mg(2+) as a cofactor.

The catalysed reaction is 5-(2-hydroxyethyl)-4-methylthiazole + ATP = 4-methyl-5-(2-phosphooxyethyl)-thiazole + ADP + H(+). Its pathway is cofactor biosynthesis; thiamine diphosphate biosynthesis; 4-methyl-5-(2-phosphoethyl)-thiazole from 5-(2-hydroxyethyl)-4-methylthiazole: step 1/1. Catalyzes the phosphorylation of the hydroxyl group of 4-methyl-5-beta-hydroxyethylthiazole (THZ). The sequence is that of Hydroxyethylthiazole kinase from Staphylococcus aureus (strain JH9).